The sequence spans 256 residues: Thiazole synthase (256 aa).

The Schiff-base intermediate with DXP role is filled by K96. 1-deoxy-D-xylulose 5-phosphate-binding positions include G157, 183–184 (AG), and 205–206 (NT).

It belongs to the ThiG family. Homotetramer. Forms heterodimers with either ThiH or ThiS.

Its subcellular location is the cytoplasm. The catalysed reaction is [ThiS sulfur-carrier protein]-C-terminal-Gly-aminoethanethioate + 2-iminoacetate + 1-deoxy-D-xylulose 5-phosphate = [ThiS sulfur-carrier protein]-C-terminal Gly-Gly + 2-[(2R,5Z)-2-carboxy-4-methylthiazol-5(2H)-ylidene]ethyl phosphate + 2 H2O + H(+). It functions in the pathway cofactor biosynthesis; thiamine diphosphate biosynthesis. Functionally, catalyzes the rearrangement of 1-deoxy-D-xylulose 5-phosphate (DXP) to produce the thiazole phosphate moiety of thiamine. Sulfur is provided by the thiocarboxylate moiety of the carrier protein ThiS. In vitro, sulfur can be provided by H(2)S. This is Thiazole synthase from Clostridium beijerinckii (strain ATCC 51743 / NCIMB 8052) (Clostridium acetobutylicum).